Consider the following 1075-residue polypeptide: Flocculation protein FLO5 (1075 aa).

Residues 1 to 24 (MTIAHHCIFLVILAFLALINVASG) form the signal peptide. Residues 74–249 (GGQTDISIDY…GTTVSDNFEG (176 aa)) enclose the PA14 domain. Asn135, Asn187, Asn203, and Asn262 each carry an N-linked (GlcNAc...) asparagine glycan. The interval 197–240 (DGSLPDNITGTVYMYAGYYYPLKVVYSNAVSWGTLPISVELPDG) is sugar recognition. 8 repeat units span residues 278 to 322 (TTTE…STIT), 323 to 367 (TTTE…GLIT), 368 to 412 (TTTE…GLIT), 413 to 457 (TTTE…GLIT), 458 to 502 (TTTE…GLIS), 503 to 547 (TTTE…GLIT), 548 to 592 (TTTE…GLIT), and 593 to 637 (RTTE…ISSS). An 8 X 45 AA approximate tandem repeats, Thr-rich region spans residues 278–637 (TTTEPWTGTF…RTPTTAISSS (360 aa)). 4 stretches are compositionally biased toward low complexity: residues 322–345 (TTTTEPWTGTFTSTSTEMTTVTGT), 367–390 (TTTTEPWTGTFTSTSTEMTTVTGT), 457–480 (TTTTEPWTGTFTSTSTEMTTVTGT), and 547–570 (TTTTEPWTGTFTSTSTEMTTVTGT). Disordered regions lie at residues 322–349 (TTTTEPWTGTFTSTSTEMTTVTGTNGQP), 366–394 (ITTTTEPWTGTFTSTSTEMTTVTGTNGQP), 456–484 (ITTTTEPWTGTFTSTSTEMTTVTGTNGQP), and 546–574 (ITTTTEPWTGTFTSTSTEMTTVTGTNGQP). An N-linked (GlcNAc...) asparagine glycan is attached at Asn663. Repeat copies occupy residues 667-686 (VISSSVISSSVTSSLVTSSS) and 687-706 (FISSSVISSSTTTSTSIFSE). The 2 X 20 AA approximate tandem repeats, Ser-rich stretch occupies residues 667-706 (VISSSVISSSVTSSLVTSSSFISSSVISSSTTTSTSIFSE). Residues 702-762 (SIFSESSTSS…SLPPVTSATT (61 aa)) are compositionally biased toward low complexity. Residues 702–781 (SIFSESSTSS…PATTTKTSEQ (80 aa)) form a disordered region. Asn749 carries N-linked (GlcNAc...) asparagine glycosylation. The segment covering 763–781 (GQETASSLPPATTTKTSEQ) has biased composition (polar residues). A run of 3 repeats spans residues 775 to 825 (TTKT…CPIS), 847 to 897 (TTET…CPIS), and 898 to 948 (TTES…RPQT). The 3 X 51 AA approximate repeats, Ser/Thr-rich stretch occupies residues 775–948 (TTKTSEQTTL…TVYPTWRPQT (174 aa)). The segment covering 948 to 958 (TTNEQSVSSKM) has biased composition (polar residues). Disordered regions lie at residues 948-980 (TTNEQSVSSKMNSATSETTTNTGAAETKTAVTS) and 1016-1038 (SLTSSGLSTMSQQPRSTPASSMV). 2 stretches are compositionally biased toward low complexity: residues 959–977 (NSATSETTTNTGAAETKTA) and 1016–1026 (SLTSSGLSTMS). Polar residues predominate over residues 1027 to 1038 (QQPRSTPASSMV). Gly1052 is lipidated: GPI-anchor amidated glycine. Residues 1053–1075 (SANSLLAGSGLSVFIASLLLAII) constitute a propeptide, removed in mature form.

This sequence belongs to the flocculin family. Post-translationally, extensively O-glycosylated. In terms of processing, the GPI-anchor is attached to the protein in the endoplasmic reticulum and serves to target the protein to the cell surface. There, the glucosamine-inositol phospholipid moiety is cleaved off and the GPI-modified mannoprotein is covalently attached via its lipidless GPI glycan remnant to the 1,6-beta-glucan of the outer cell wall layer.

It localises to the secreted. The protein localises to the cell wall. The protein resides in the membrane. Cell wall protein that participates directly in adhesive cell-cell interactions during yeast flocculation, a reversible, asexual and Ca(2+)-dependent process in which cells adhere to form aggregates (flocs) consisting of thousands of cells. The lectin-like protein sticks out of the cell wall of flocculent cells and selectively binds mannose residues in the cell walls of adjacent cells. Activity is inhibited by mannose, but not by glucose, maltose, sucrose or galactose. This chain is Flocculation protein FLO5 (FLO5), found in Saccharomyces cerevisiae (strain ATCC 204508 / S288c) (Baker's yeast).